Here is a 193-residue protein sequence, read N- to C-terminus: SSVNARPCSSPLVCPAKGEKFFGVGSASRIRQLPPRLAWCSIDWDQLCLLHLLGSGGFGSVYKATYHGATVAVKQVKKCSKNHLASRQSFWAELNVACLDHNNVVHIVAASTCTPTSQDSLGTIIMEYAGNCTLHHVIYGIGYLTGNNDGLKRDHEFLSTAQAVVYSCDIVAGLMFLHSQLIVHLDLKPANIF.

One can recognise a Protein kinase domain in the interval 47–193; sequence LCLLHLLGSG…HLDLKPANIF (147 aa). ATP-binding positions include 53 to 61 and lysine 74; that span reads LGSGGFGSV. Aspartate 186 (proton acceptor) is an active-site residue.

This sequence belongs to the protein kinase superfamily. Ser/Thr protein kinase family.

It catalyses the reaction L-seryl-[protein] + ATP = O-phospho-L-seryl-[protein] + ADP + H(+). The enzyme catalyses L-threonyl-[protein] + ATP = O-phospho-L-threonyl-[protein] + ADP + H(+). In Sibon nebulatus (Cloudy snail-eating snake), this protein is Serine/threonine-protein kinase mos (MOS).